Consider the following 696-residue polypeptide: ATP-dependent zinc metalloprotease FtsH (696 aa).

Residues 1–29 are Cytoplasmic-facing; sequence MWLQVTNCSTLHSSLSYCGANTLSDMAKN. The chain crosses the membrane as a helical span at residues 30 to 50; the sequence is LILWLVIAVVLMSVFQSFGPS. Residues 51–124 are Periplasmic-facing; sequence DSAGRQVDYT…LGTPPEEPSL (74 aa). The chain crosses the membrane as a helical span at residues 125–145; that stretch reads LASIFISWFPMLLLIGVWVFF. Over 146–696 the chain is Cytoplasmic; that stretch reads MRQMQGGGGG…APKEDDKPQA (551 aa). 219–226 contacts ATP; the sequence is GPPGTGKT. A Zn(2+)-binding site is contributed by His-441. The active site involves Glu-442. Residues His-445 and Asp-519 each contribute to the Zn(2+) site. The interval 627-696 is disordered; that stretch reads RAPKGWGDTD…APKEDDKPQA (70 aa). Positions 650-696 are enriched in basic and acidic residues; sequence PEAKTESAPEAKAEANVETEEKPVAADSEELKPKAEQAPKEDDKPQA.

In the central section; belongs to the AAA ATPase family. The protein in the C-terminal section; belongs to the peptidase M41 family. In terms of assembly, homohexamer. The cofactor is Zn(2+).

Its subcellular location is the cell inner membrane. Functionally, acts as a processive, ATP-dependent zinc metallopeptidase for both cytoplasmic and membrane proteins. Plays a role in the quality control of integral membrane proteins. The chain is ATP-dependent zinc metalloprotease FtsH from Photobacterium profundum (strain SS9).